The sequence spans 141 residues: Hemoglobin subunit alpha (141 aa).

Residues 1–141 (VLSSADKNNV…VSTVLTSKYR (141 aa)) enclose the Globin domain. Residue Ser-3 is modified to Phosphoserine. An N6-succinyllysine mark is found at Lys-7 and Lys-11. Lys-16 is modified (N6-acetyllysine; alternate). Position 16 is an N6-succinyllysine; alternate (Lys-16). Phosphotyrosine is present on Tyr-24. Ser-35 carries the phosphoserine modification. Lys-40 bears the N6-succinyllysine mark. Ser-49 bears the Phosphoserine mark. His-58 serves as a coordination point for O2. Residue His-87 coordinates heme b. Ser-102 carries the post-translational modification Phosphoserine. Thr-108 is modified (phosphothreonine). Residue Ser-124 is modified to Phosphoserine. Phosphothreonine occurs at positions 134 and 137. Ser-138 carries the phosphoserine modification.

This sequence belongs to the globin family. As to quaternary structure, heterotetramer of two alpha chains and two beta chains. Red blood cells.

Its function is as follows. Involved in oxygen transport from the lung to the various peripheral tissues. Functionally, hemopressin acts as an antagonist peptide of the cannabinoid receptor CNR1. Hemopressin-binding efficiently blocks cannabinoid receptor CNR1 and subsequent signaling. This Panthera pardus saxicolor (Northern Persian leopard) protein is Hemoglobin subunit alpha (HBA).